The chain runs to 226 residues: Sugar fermentation stimulation protein homolog (226 aa).

It belongs to the SfsA family.

This chain is Sugar fermentation stimulation protein homolog, found in Picrophilus torridus (strain ATCC 700027 / DSM 9790 / JCM 10055 / NBRC 100828 / KAW 2/3).